Consider the following 312-residue polypeptide: Zinc import ATP-binding protein ZnuC (312 aa).

In terms of domain architecture, ABC transporter spans 13 to 228; the sequence is VSLEDVGVLR…PEYVRLFGSR (216 aa). 45 to 52 is an ATP binding site; that stretch reads GPNGSGKS. The segment at 241 to 312 is disordered; the sequence is DHTHLPDGRV…HSRSGEGRHA (72 aa). The span at 243-312 shows a compositional bias: basic and acidic residues; it reads THLPDGRVLH…HSRSGEGRHA (70 aa).

This sequence belongs to the ABC transporter superfamily. Zinc importer (TC 3.A.1.15.5) family. As to quaternary structure, the complex is composed of two ATP-binding proteins (ZnuC), two transmembrane proteins (ZnuB) and a solute-binding protein (ZnuA).

The protein resides in the cell inner membrane. It catalyses the reaction Zn(2+)(out) + ATP(in) + H2O(in) = Zn(2+)(in) + ADP(in) + phosphate(in) + H(+)(in). Its function is as follows. Part of the ABC transporter complex ZnuABC involved in zinc import. Responsible for energy coupling to the transport system. The chain is Zinc import ATP-binding protein ZnuC from Rhizobium etli (strain ATCC 51251 / DSM 11541 / JCM 21823 / NBRC 15573 / CFN 42).